A 213-amino-acid chain; its full sequence is MSDATSMKHPSGLTSGDFTAAEEPFALFAEWFAEAVASEPNDPNAMALATVDADGLPDVRMVLMKDYDATGFVFYSHLASQKGQELAANPKAALLFHWKSLRRQVRVRGLVAPVTDAEADAYFATRPKQAQIGAWASKQSQPLESRFAFEQAIAKVAAKHLLGEVPRPPGWSGWRVTPSHIEFWHDRPFRLHDRIEFRRDDPAHPWSKTRLYP.

Residues 60–65 (RMVLMK), 75–76 (YS), Lys-82, and Gln-104 each bind FMN. Lys-65 contributes to the substrate binding site. Substrate-binding residues include Tyr-122 and Arg-126. FMN contacts are provided by residues 139-140 (QS) and Trp-184. 190–192 (RLH) is a binding site for substrate. An FMN-binding site is contributed by Arg-194.

Belongs to the pyridoxamine 5'-phosphate oxidase family. As to quaternary structure, homodimer. FMN is required as a cofactor.

It carries out the reaction pyridoxamine 5'-phosphate + O2 + H2O = pyridoxal 5'-phosphate + H2O2 + NH4(+). It catalyses the reaction pyridoxine 5'-phosphate + O2 = pyridoxal 5'-phosphate + H2O2. Its pathway is cofactor metabolism; pyridoxal 5'-phosphate salvage; pyridoxal 5'-phosphate from pyridoxamine 5'-phosphate: step 1/1. The protein operates within cofactor metabolism; pyridoxal 5'-phosphate salvage; pyridoxal 5'-phosphate from pyridoxine 5'-phosphate: step 1/1. Its function is as follows. Catalyzes the oxidation of either pyridoxine 5'-phosphate (PNP) or pyridoxamine 5'-phosphate (PMP) into pyridoxal 5'-phosphate (PLP). The protein is Pyridoxine/pyridoxamine 5'-phosphate oxidase of Rhodopseudomonas palustris (strain BisA53).